The chain runs to 392 residues: Selenide, water dikinase 1 (392 aa).

Ser-2 carries the post-translational modification N-acetylserine. The active site involves Cys-31. ATP is bound by residues Lys-32, 67–69, Asp-87, Asp-110, and 161–164; these read GMD and GGQT. Asp-69 serves as a coordination point for Mg(2+). Asp-110 contacts Mg(2+). Asp-265 serves as a coordination point for Mg(2+).

The protein belongs to the selenophosphate synthase 1 family. Class II subfamily. In terms of assembly, homodimer. Heterodimer with isoform 3. Homodimer. Heterodimer with isoform 4. As to quaternary structure, homodimer. Heterodimer with isoform 1. In terms of assembly, homodimer. Heterodimer with isoform 2. Mg(2+) is required as a cofactor. In terms of tissue distribution, gradually expressed during the cell cycle until G2/M phase and then decreases. Gradually expressed during the cell cycle until S phase and then decreases.

The protein resides in the cell membrane. Its subcellular location is the nucleus membrane. It is found in the cytoplasm. The catalysed reaction is hydrogenselenide + ATP + H2O = selenophosphate + AMP + phosphate + 2 H(+). With respect to regulation, activated by phosphate ions and by potassium ions. In terms of biological role, synthesizes selenophosphate from selenide and ATP. This is Selenide, water dikinase 1 (SEPHS1) from Homo sapiens (Human).